The sequence spans 232 residues: EEF1A lysine methyltransferase 3 (232 aa).

Residues tryptophan 57, 83–85 (GAG), aspartate 104, tryptophan 133, and alanine 150 contribute to the S-adenosyl-L-methionine site.

Belongs to the methyltransferase superfamily. METTL21 family. Interacts with members of the heat shock protein 70 and 90 families and of the TCP-1 chaperonin family, as well as with HSPD1, STIP1 and tubulin; at least some of these proteins may be methylation substrates.

The protein localises to the cytoplasm. It localises to the cytoskeleton. It is found in the microtubule organizing center. The protein resides in the centrosome. It catalyses the reaction L-lysyl-[protein] + 3 S-adenosyl-L-methionine = N(6),N(6),N(6)-trimethyl-L-lysyl-[protein] + 3 S-adenosyl-L-homocysteine + 3 H(+). It carries out the reaction L-lysyl-[protein] + S-adenosyl-L-methionine = N(6)-methyl-L-lysyl-[protein] + S-adenosyl-L-homocysteine + H(+). The enzyme catalyses N(6)-methyl-L-lysyl-[protein] + S-adenosyl-L-methionine = N(6),N(6)-dimethyl-L-lysyl-[protein] + S-adenosyl-L-homocysteine + H(+). The catalysed reaction is N(6),N(6)-dimethyl-L-lysyl-[protein] + S-adenosyl-L-methionine = N(6),N(6),N(6)-trimethyl-L-lysyl-[protein] + S-adenosyl-L-homocysteine + H(+). Its function is as follows. Protein-lysine methyltransferase that selectively mono-, di- and trimethylates 'Lys-165' of the translation elongation factors EEF1A1 and EEF1A2 in an aminoacyl-tRNA and GTP-dependent manner. EEF1A1 methylation by EEF1AKMT3 is dynamic as well as inducible by stress conditions, such as ER-stress, and plays a regulatory role on mRNA translation. In Mus musculus (Mouse), this protein is EEF1A lysine methyltransferase 3.